Consider the following 433-residue polypeptide: Tubulin epsilon and delta complex protein 2 (433 aa).

3 disordered regions span residues 45-69 (TGTR…ACTP), 95-169 (TKAG…VGMG), and 326-345 (QPPR…SCGG). Polar residues predominate over residues 107-120 (KSRSIVTSSGTTAS). Residue Ser-159 is modified to Phosphoserine. The segment covering 327–339 (PPRPCPVGRPPGA) has biased composition (pro residues).

Interacts with TEDC1. Found in a complex with TEDC1, TEDC2, TUBE1 and TUBD1.

It is found in the cell projection. The protein resides in the cilium. The protein localises to the cytoplasm. Its subcellular location is the cytoskeleton. It localises to the microtubule organizing center. It is found in the centrosome. The protein resides in the centriole. In terms of biological role, acts as a positive regulator of ciliary hedgehog signaling. Required for centriole stability. The protein is Tubulin epsilon and delta complex protein 2 of Homo sapiens (Human).